The following is a 984-amino-acid chain: Lateral signaling target protein 2 homolog (984 aa).

Disordered regions lie at residues 308–462 (PLGS…DTDE), 508–527 (YGTT…PSTS), 539–642 (RLRL…SSLS), and 749–900 (DNVF…SPPA). 4 stretches are compositionally biased toward low complexity: residues 326 to 356 (TTSS…TTST), 369 to 380 (NNHNSNSNSSTN), 387 to 404 (TLRS…TPTA), and 412 to 433 (PSHS…PADW). The segment covering 434 to 462 (SDGDDEDEDDDDIEVDEEDLESSDDDTDE) has biased composition (acidic residues). Residues serine 544 and serine 545 each carry the phosphoserine modification. The segment covering 571-611 (RESHSHRHHQRHHHHHHHRHSHQHQHRQPHPHRTTRSGRKR) has biased composition (basic residues). The span at 630–642 (LASGDTSAASSLS) shows a compositional bias: low complexity. 2 stretches are compositionally biased toward polar residues: residues 760-779 (ATGQ…TIDL) and 789-806 (SGAT…SRSL). Phosphoserine is present on serine 805. 2 stretches are compositionally biased toward low complexity: residues 811–869 (AASS…PVSA) and 886–899 (PSSA…LSPP). The FYVE-type zinc finger occupies 904-964 (DGKAPRCMAC…VCRDCYVREV (61 aa)). Zn(2+) contacts are provided by cysteine 910, cysteine 913, cysteine 926, cysteine 929, cysteine 934, cysteine 937, cysteine 956, and cysteine 959.

Belongs to the lst-2 family.

In terms of biological role, negative regulator of epidermal growth factor receptor (EGFR) signaling. In Drosophila yakuba (Fruit fly), this protein is Lateral signaling target protein 2 homolog.